The sequence spans 740 residues: Phosphoribosylformylglycinamidine synthase subunit PurL (740 aa).

The active site involves H55. The ATP site is built by Y58 and K97. E99 lines the Mg(2+) pocket. Residues 100–103 (SHNH) and R122 contribute to the substrate site. Residue H101 is the Proton acceptor of the active site. Residue D123 coordinates Mg(2+). Q246 contacts substrate. A Mg(2+)-binding site is contributed by D276. 320–322 (ESQ) contacts substrate. Residues D501 and G538 each contribute to the ATP site. Position 539 (N539) interacts with Mg(2+). S541 contributes to the substrate binding site.

This sequence belongs to the FGAMS family. Monomer. Part of the FGAM synthase complex composed of 1 PurL, 1 PurQ and 2 PurS subunits.

It localises to the cytoplasm. It carries out the reaction N(2)-formyl-N(1)-(5-phospho-beta-D-ribosyl)glycinamide + L-glutamine + ATP + H2O = 2-formamido-N(1)-(5-O-phospho-beta-D-ribosyl)acetamidine + L-glutamate + ADP + phosphate + H(+). Its pathway is purine metabolism; IMP biosynthesis via de novo pathway; 5-amino-1-(5-phospho-D-ribosyl)imidazole from N(2)-formyl-N(1)-(5-phospho-D-ribosyl)glycinamide: step 1/2. Functionally, part of the phosphoribosylformylglycinamidine synthase complex involved in the purines biosynthetic pathway. Catalyzes the ATP-dependent conversion of formylglycinamide ribonucleotide (FGAR) and glutamine to yield formylglycinamidine ribonucleotide (FGAM) and glutamate. The FGAM synthase complex is composed of three subunits. PurQ produces an ammonia molecule by converting glutamine to glutamate. PurL transfers the ammonia molecule to FGAR to form FGAM in an ATP-dependent manner. PurS interacts with PurQ and PurL and is thought to assist in the transfer of the ammonia molecule from PurQ to PurL. The sequence is that of Phosphoribosylformylglycinamidine synthase subunit PurL from Lacticaseibacillus casei (Lactobacillus casei).